The chain runs to 484 residues: MTATATEHVAATSGATGRIARVIGPVVDVEFPADAIPSIYNALTTEITLNGETKTITFETSQHLGDNLVRAISLQATDGLVRGTSVVDSGAPISVPVGDGVKGHIFNVLGQPLDVTESELDISERWPIHRKAPAFASLEGSTEMLETGIKVIDLLTPYIKGGKIGLFGGAGVGKTVLIQEMITRVARNFGGTSVFAGVGERTREGNDLWVEMEEAGVLKDTALVFGQMDEPPGTRLRVALSALTMAEYFRDVQNQDVLLFIDNIFRFTQAGSEVSTLLGRMPSAVGYQPNLADEMGLLQERITSTKGHSITSMQAIYVPADDYTDPAPATTFAHLDATTELSREIASRGLYPAVDPLTSTSRILDPQYIGKDHYNTAVRVKQILQKNKELQDIIAILGVDELSEEDKIVVSRARRIQQFLSQNTYTAKQFTGVEGSTVSIKDTVEGFTAICDGELDHIAEQAFFNVGGLDDVERQWAKIQEQTK.

ATP is bound at residue Gly168–Thr175.

It belongs to the ATPase alpha/beta chains family. As to quaternary structure, F-type ATPases have 2 components, CF(1) - the catalytic core - and CF(0) - the membrane proton channel. CF(1) has five subunits: alpha(3), beta(3), gamma(1), delta(1), epsilon(1). CF(0) has three main subunits: a(1), b(2) and c(9-12). The alpha and beta chains form an alternating ring which encloses part of the gamma chain. CF(1) is attached to CF(0) by a central stalk formed by the gamma and epsilon chains, while a peripheral stalk is formed by the delta and b chains.

The protein localises to the cell membrane. It catalyses the reaction ATP + H2O + 4 H(+)(in) = ADP + phosphate + 5 H(+)(out). In terms of biological role, produces ATP from ADP in the presence of a proton gradient across the membrane. The catalytic sites are hosted primarily by the beta subunits. This is ATP synthase subunit beta from Pseudarthrobacter chlorophenolicus (strain ATCC 700700 / DSM 12829 / CIP 107037 / JCM 12360 / KCTC 9906 / NCIMB 13794 / A6) (Arthrobacter chlorophenolicus).